The primary structure comprises 139 residues: ATP synthase epsilon chain 2 (139 aa).

The protein belongs to the ATPase epsilon chain family. As to quaternary structure, F-type ATPases have 2 components, CF(1) - the catalytic core - and CF(0) - the membrane proton channel. CF(1) has five subunits: alpha(3), beta(3), gamma(1), delta(1), epsilon(1). CF(0) has three main subunits: a, b and c.

It is found in the cell inner membrane. Functionally, produces ATP from ADP in the presence of a proton gradient across the membrane. The sequence is that of ATP synthase epsilon chain 2 from Paraburkholderia xenovorans (strain LB400).